The sequence spans 378 residues: Glutamate 5-kinase (378 aa).

Lys20 contributes to the ATP binding site. Residues Ser60, Asp147, and Asn159 each coordinate substrate. ATP is bound by residues 179 to 180 (TD) and 221 to 227 (TGGMLTK). The region spanning 286-364 (RGRVVLDDGA…SQIARILGSM (79 aa)) is the PUA domain.

Belongs to the glutamate 5-kinase family.

The protein resides in the cytoplasm. The enzyme catalyses L-glutamate + ATP = L-glutamyl 5-phosphate + ADP. It functions in the pathway amino-acid biosynthesis; L-proline biosynthesis; L-glutamate 5-semialdehyde from L-glutamate: step 1/2. Catalyzes the transfer of a phosphate group to glutamate to form L-glutamate 5-phosphate. This Bordetella pertussis (strain Tohama I / ATCC BAA-589 / NCTC 13251) protein is Glutamate 5-kinase.